The chain runs to 156 residues: Small ribosomal subunit protein uS7 (156 aa).

The protein belongs to the universal ribosomal protein uS7 family. Part of the 30S ribosomal subunit. Contacts proteins S9 and S11.

In terms of biological role, one of the primary rRNA binding proteins, it binds directly to 16S rRNA where it nucleates assembly of the head domain of the 30S subunit. Is located at the subunit interface close to the decoding center, probably blocks exit of the E-site tRNA. This chain is Small ribosomal subunit protein uS7, found in Mycobacterium tuberculosis (strain CDC 1551 / Oshkosh).